A 498-amino-acid chain; its full sequence is PHD finger protein 10 (498 aa).

Residues 1-10 show a composition bias toward low complexity; it reads MAAAAGPGAA. Residues 1 to 62 are disordered; that stretch reads MAAAAGPGAA…SSRSCETSSQ (62 aa). A2 carries the N-acetylalanine modification. Residues S12, S36, and S50 each carry the phosphoserine modification. Positions 89–185 are essential to induce neural progenitor proliferation; that stretch reads MLQEQVSEYL…HYKEYSQMQQ (97 aa). Positions 89–295 are SAY; it reads MLQEQVSEYL…PPLDPELPAL (207 aa). A Glycyl lysine isopeptide (Lys-Gly) (interchain with G-Cter in SUMO2) cross-link involves residue K241. A Phosphoserine modification is found at S270. Positions 285–296 are enriched in low complexity; that stretch reads EPPLDPELPALD. Residues 285–368 form a disordered region; that stretch reads EPPLDPELPA…KRSVLSKSVP (84 aa). Positions 292–334 are essential to induce neural progenitor proliferation; sequence LPALDSDGDSDDGEDGRGDEKRKNKGTSDSSSGNVSEGESPPD. 4 positions are modified to phosphoserine: S297, S301, S327, and S331. A compositionally biased stretch (polar residues) spans 318-328; sequence TSDSSSGNVSE. The span at 345 to 359 shows a compositional bias: basic and acidic residues; it reads KSKDKAATPRKDGPK. Residues 379-436 form a PHD-type 1; degenerate zinc finger; it reads ICGICLKGKESNKKGKAESLIHCSQCENSGHPSCLDMTMELVSMIKTYPWQCMECKTC. K385 participates in a covalent cross-link: Glycyl lysine isopeptide (Lys-Gly) (interchain with G-Cter in SUMO2). The segment at 438-481 adopts a PHD-type 2; degenerate zinc-finger fold; the sequence is ICGQPHHEEEMMFCDMCDRGYHTFCVGLGAIPSGRWICDCCQRA.

It belongs to the SAYP family. In terms of assembly, component of neural progenitors-specific chromatin remodeling complex (npBAF complex) composed of at least, ARID1A/BAF250A or ARID1B/BAF250B, SMARCD1/BAF60A, SMARCD3/BAF60C, SMARCA2/BRM/BAF190B, SMARCA4/BRG1/BAF190A, SMARCB1/BAF47, SMARCC1/BAF155, SMARCE1/BAF57, SMARCC2/BAF170, PHF10/BAF45A, ACTL6A/BAF53A and actin. Interacts with ACTL6A/BAF53A, SMARCA2/BRM/BAF190B, SMARCA4/BRG1/BAF190A and PBRM1/BAF180.

The protein localises to the nucleus. Involved in transcription activity regulation by chromatin remodeling. Belongs to the neural progenitors-specific chromatin remodeling complex (npBAF complex) and is required for the proliferation of neural progenitors. During neural development a switch from a stem/progenitor to a post-mitotic chromatin remodeling mechanism occurs as neurons exit the cell cycle and become committed to their adult state. The transition from proliferating neural stem/progenitor cells to post-mitotic neurons requires a switch in subunit composition of the npBAF and nBAF complexes. As neural progenitors exit mitosis and differentiate into neurons, npBAF complexes which contain ACTL6A/BAF53A and PHF10/BAF45A, are exchanged for homologous alternative ACTL6B/BAF53B and DPF1/BAF45B or DPF3/BAF45C subunits in neuron-specific complexes (nBAF). The npBAF complex is essential for the self-renewal/proliferative capacity of the multipotent neural stem cells. The nBAF complex along with CREST plays a role regulating the activity of genes essential for dendrite growth. The polypeptide is PHD finger protein 10 (PHF10) (Homo sapiens (Human)).